The primary structure comprises 196 residues: Cell division protein SepF (196 aa).

Residues 16 to 81 form a disordered region; that stretch reads EDDEEFNEPA…KRAGSTFTKP (66 aa). The span at 56–69 shows a compositional bias: polar residues; sequence RPAQSTSKAQTQTA.

It belongs to the SepF family. In terms of assembly, homodimer. Interacts with FtsZ.

It is found in the cytoplasm. Its function is as follows. Cell division protein that is part of the divisome complex and is recruited early to the Z-ring. Probably stimulates Z-ring formation, perhaps through the cross-linking of FtsZ protofilaments. Its function overlaps with FtsA. The protein is Cell division protein SepF of Lactococcus lactis subsp. lactis (strain IL1403) (Streptococcus lactis).